The chain runs to 671 residues: DNA ligase (671 aa).

Residues 32–36 (DAEYD), 81–82 (SL), and Glu113 each bind NAD(+). Lys115 functions as the N6-AMP-lysine intermediate in the catalytic mechanism. NAD(+) contacts are provided by Arg136, Glu173, Lys290, and Lys314. Residues Cys408, Cys411, Cys426, and Cys432 each coordinate Zn(2+). Positions 593–671 (EIDSPFAGKT…EAEMLRLLGS (79 aa)) constitute a BRCT domain.

This sequence belongs to the NAD-dependent DNA ligase family. LigA subfamily. Mg(2+) serves as cofactor. Mn(2+) is required as a cofactor.

The enzyme catalyses NAD(+) + (deoxyribonucleotide)n-3'-hydroxyl + 5'-phospho-(deoxyribonucleotide)m = (deoxyribonucleotide)n+m + AMP + beta-nicotinamide D-nucleotide.. DNA ligase that catalyzes the formation of phosphodiester linkages between 5'-phosphoryl and 3'-hydroxyl groups in double-stranded DNA using NAD as a coenzyme and as the energy source for the reaction. It is essential for DNA replication and repair of damaged DNA. The polypeptide is DNA ligase (Escherichia coli (strain SE11)).